The following is a 370-amino-acid chain: Dihydroorotate dehydrogenase (370 aa).

Substrate-binding positions include lysine 82, 135–139, and asparagine 200; that span reads NSFGM. 82–83 serves as a coordination point for FMN; it reads KT. Asparagine 200 serves as a coordination point for FMN. The active-site Nucleophile is cysteine 203. Positions 241 and 269 each coordinate FMN. Residue 270 to 271 participates in substrate binding; sequence NT. FMN-binding positions include glycine 297, 328-329, and 350-351; these read GG and AT.

It belongs to the dihydroorotate dehydrogenase family. FMN is required as a cofactor.

It carries out the reaction (S)-dihydroorotate + A = orotate + AH2. The protein operates within pyrimidine metabolism; UMP biosynthesis via de novo pathway. In terms of biological role, catalyzes the conversion of dihydroorotate to orotate. Participates in the pyrimidine biosynthetic pathway. The chain is Dihydroorotate dehydrogenase (pyr4) from Dictyostelium discoideum (Social amoeba).